A 303-amino-acid polypeptide reads, in one-letter code: Aquaporin-7 (303 aa).

The Cytoplasmic segment spans residues 1-21 (MAPRSVLETIQSVLQKNMVRE). Position 5 is a phosphoserine (serine 5). Residues 22–39 (FLAEFLSTYVMMVFGLGS) form a helical membrane-spanning segment. The Extracellular segment spans residues 40–52 (VAHMVLGENSGSY). Residues 53 to 70 (LGVNLGFGFGVTMGVHVA) traverse the membrane as a helical segment. The Cytoplasmic portion of the chain corresponds to 71-74 (GGIS). Positions 75 to 88 (GAHMNAAVTFTNCA) form an intramembrane region, discontinuously helical. An NPA 1 motif is present at residues 79–81 (NAA). Residues 89–96 (LGRMTWKK) lie on the Cytoplasmic side of the membrane. Residues 97–117 (FPVYVLGQFLGSFSAAATTYL) traverse the membrane as a helical segment. Residues 118 to 152 (IFYGAINHFAGGDLLVTGSKATANIFATYLPEYMT) lie on the Extracellular side of the membrane. A helical transmembrane segment spans residues 153–173 (LWRGFLDEAFVTGMLQLCLFA). The Cytoplasmic segment spans residues 174-185 (ITDKKNSPALQG). The helical transmembrane segment at 186-202 (TEPLVIGILVTVLGVSL) threads the bilayer. Residues 203–206 (GMNS) lie on the Extracellular side of the membrane. Positions 207-220 (GYAINPSRDLPPRL) form an intramembrane region, discontinuously helical. The NPA 2 signature appears at 211–213 (NPS). Over 221–238 (FTFIAGWGKQVFRAGNNW) the chain is Extracellular. A helical membrane pass occupies residues 239 to 260 (WWVPVVAPLLGAYLGGIVYLGL). Over 261 to 303 (IHPSIPQDPQRLENFTARDQKVTASYKNAASANISGSVPLEHF) the chain is Cytoplasmic.

Belongs to the MIP/aquaporin (TC 1.A.8) family. Homotetramer; each monomer provides an independent glycerol/water pore. Two homotetramers on opposing membranes can dimerize, forming a cell-cell junction. Interacts with PLIN1. In terms of processing, phosphorylation by PKA could prevent the interaction with PLIN1. In terms of tissue distribution, detected in proximal tubules in kidney. Detected in the capillary network between muscle fibers in skeletal muscle and heart, and in spermatids and on spermatozoa tails in testis and epididymis. Detected in white and brown adipose tissue, especially on small blood vessels (at protein level). Detected in kidney and white adipose tissue.

It localises to the cell membrane. The protein localises to the cytoplasmic vesicle membrane. The protein resides in the lipid droplet. The enzyme catalyses glycerol(in) = glycerol(out). It carries out the reaction H2O(in) = H2O(out). The catalysed reaction is urea(in) = urea(out). With respect to regulation, glycerol transport is regulated by pH, with the porin being permeable to glycerol at pH 7.4 but not at pH 5.5. Water permeability, however, is not influenced by pH. In terms of biological role, aquaglyceroporins form homotetrameric transmembrane channels, with each monomer independently mediating glycerol and water transport across the plasma membrane along their osmotic gradient. Could also be permeable to urea. Mediates the efflux of glycerol, formed upon triglyceride hydrolysis, to avoid its accumulation in adipocytes and to make it available to other tissues. In the kidney, mediates the reabsorption of glycerol, preventing its loss in urine, again participating to energy homeostasis. In pancreatic beta cells, it also mediates the efflux of glycerol, regulating its intracellular levels. This Mus musculus (Mouse) protein is Aquaporin-7.